The chain runs to 531 residues: Efflux pump terG (531 aa).

The span at 1 to 11 shows a compositional bias: polar residues; it reads MSSSTLEGQET. Residues 1 to 27 form a disordered region; the sequence is MSSSTLEGQETASHHSKNSPSRHGDDG. The next 13 membrane-spanning stretches (helical) occupy residues 86–106, 117–137, 145–165, 179–199, 207–227, 249–269, 280–300, 319–339, 351–371, 380–400, 402–422, 447–467, and 488–508; these read GKLSWTISGYGLTLGTFILIG, AIFVIGMGWLALTSMMAGVSV, ILARVLQGLGPALTVPNALAI, FAWFAASAPVGAMAGLLFGPL, WIYWSQALGVAFVFALSIVAI, IDLLGGACGVTALVLFNFAWN, YVYVCLILSFLFLAAFFYVEL, FVFGCTAAGWSTFGIWLFYVI, IQMAAWLSPILVTGIGTALIV, ASSIMLFAMLCYFITSLLMAL, PVHSIYWTYFFFATIIATFAM, SVIMTIVVYSISLGLGFAGTI, and TLWFSVGLTAFGTVLALIFLL.

This sequence belongs to the major facilitator superfamily.

It is found in the cell membrane. Its function is as follows. Efflux pump that might be required for efficient secretion of terrein or other secondary metabolies produced by the terrein genne cluster. In Aspergillus terreus (strain NIH 2624 / FGSC A1156), this protein is Efflux pump terG.